We begin with the raw amino-acid sequence, 443 residues long: ATP-dependent protease ATPase subunit HslU (443 aa).

ATP contacts are provided by residues isoleucine 20, 62–67 (GVGKTE), aspartate 255, glutamate 321, and arginine 393.

The protein belongs to the ClpX chaperone family. HslU subfamily. As to quaternary structure, a double ring-shaped homohexamer of HslV is capped on each side by a ring-shaped HslU homohexamer. The assembly of the HslU/HslV complex is dependent on binding of ATP.

Its subcellular location is the cytoplasm. ATPase subunit of a proteasome-like degradation complex; this subunit has chaperone activity. The binding of ATP and its subsequent hydrolysis by HslU are essential for unfolding of protein substrates subsequently hydrolyzed by HslV. HslU recognizes the N-terminal part of its protein substrates and unfolds these before they are guided to HslV for hydrolysis. This is ATP-dependent protease ATPase subunit HslU from Helicobacter pylori (strain ATCC 700392 / 26695) (Campylobacter pylori).